We begin with the raw amino-acid sequence, 134 residues long: Putative nickel-responsive regulator (134 aa).

Histidine 78, histidine 89, histidine 91, and cysteine 97 together coordinate Ni(2+).

It belongs to the transcriptional regulatory CopG/NikR family. The cofactor is Ni(2+).

Its function is as follows. Transcriptional regulator. The protein is Putative nickel-responsive regulator of Chlorobaculum tepidum (strain ATCC 49652 / DSM 12025 / NBRC 103806 / TLS) (Chlorobium tepidum).